The sequence spans 431 residues: Adenylosuccinate synthetase (431 aa).

Residues 13-19 (GDEGKGK) and 41-43 (GHT) contribute to the GTP site. Asp-14 acts as the Proton acceptor in catalysis. Residues Asp-14 and Gly-41 each coordinate Mg(2+). IMP-binding positions include 14–17 (DEGK), 39–42 (NAGH), Thr-130, Arg-144, Gln-225, Thr-240, and Arg-304. The Proton donor role is filled by His-42. 300–306 (AVTGRPR) serves as a coordination point for substrate. GTP-binding positions include Arg-306, 332–334 (KLD), and 415–417 (STG).

The protein belongs to the adenylosuccinate synthetase family. In terms of assembly, homodimer. Mg(2+) is required as a cofactor.

It localises to the cytoplasm. The catalysed reaction is IMP + L-aspartate + GTP = N(6)-(1,2-dicarboxyethyl)-AMP + GDP + phosphate + 2 H(+). The protein operates within purine metabolism; AMP biosynthesis via de novo pathway; AMP from IMP: step 1/2. Its function is as follows. Plays an important role in the de novo pathway of purine nucleotide biosynthesis. Catalyzes the first committed step in the biosynthesis of AMP from IMP. The protein is Adenylosuccinate synthetase of Legionella pneumophila (strain Lens).